The chain runs to 603 residues: MAMFTTMTALTLTSLIPPITATLINPNKKNSYPHYVKTAIASAFTISLIPTTMFICLGQETIVTNWCWTTTQTLQLSLSFKLDYFSMTFLPVALLITWSIMEFSLWYMASDPNINQFLKFLLIFLITMIILVTANNLLQLFIGWEGVGIMSFLLISWWYARTDANTAAIQAILYNRIGDIGFILALAWFLLHSNSWELQQVFLLNNNPNLLPLLGLLLAAAGKSAQLGLHPWLPSAMEGPTPVSALLHSSTMVVAGVFLLIRFHPLTENSPHIQTLTLCLGAITTLFAAICALTQNDIKKIVAFSTSSQLGLMMVTIGINQPHLALLHICTHAFFKALLFMCSGSIIHNLNNEQDIRKMGGLLKTMPLTSTSLTISSLALAGMPFLSGFYSKDLIIETANMSYTNTWALSITLIATSLTGAYSTRMILHTLTSKPHFPTPISINENNPTLLKPIKRLMLGSLFAGFLITNNIPPMSLPQVTTPPYLKLAALAATLLGLLVALDLNYLANKLKTKTPPPTFYFSIMLGFYPSIIHRMIPHLSLLMSQNLSLLLLDLTWLKKLMPKTISQHQTSASITISTQKGLIKLYFLSFLIPLLLILLMIS.

Transmembrane regions (helical) follow at residues 4-24 (FTTM…ATLI), 38-58 (TAIA…ICLG), 89-109 (FLPV…WYMA), 122-142 (LIFL…QLFI), 171-191 (AILY…WFLL), 211-233 (LPLL…HPWL), 241-261 (TPVS…FLLI), 273-293 (IQTL…ICAL), 301-320 (IVAF…IGIN), 325-347 (ALLH…GSII), 366-386 (MPLT…MPFL), 405-424 (NTWA…AYST), 457-477 (LMLG…PMSL), 488-508 (LAAL…NYLA), 524-544 (IMLG…SLLM), and 582-602 (GLIK…LLMI).

It belongs to the complex I subunit 5 family. In terms of assembly, core subunit of respiratory chain NADH dehydrogenase (Complex I) which is composed of 45 different subunits.

It localises to the mitochondrion inner membrane. It catalyses the reaction a ubiquinone + NADH + 5 H(+)(in) = a ubiquinol + NAD(+) + 4 H(+)(out). In terms of biological role, core subunit of the mitochondrial membrane respiratory chain NADH dehydrogenase (Complex I) which catalyzes electron transfer from NADH through the respiratory chain, using ubiquinone as an electron acceptor. Essential for the catalytic activity and assembly of complex I. This chain is NADH-ubiquinone oxidoreductase chain 5 (MT-ND5), found in Pongo abelii (Sumatran orangutan).